A 689-amino-acid polypeptide reads, in one-letter code: Glycine--tRNA ligase beta subunit (689 aa).

Belongs to the class-II aminoacyl-tRNA synthetase family. Tetramer of two alpha and two beta subunits.

It localises to the cytoplasm. The enzyme catalyses tRNA(Gly) + glycine + ATP = glycyl-tRNA(Gly) + AMP + diphosphate. This chain is Glycine--tRNA ligase beta subunit, found in Escherichia coli O139:H28 (strain E24377A / ETEC).